The chain runs to 402 residues: Envelope glycoprotein D (402 aa).

The first 17 residues, 1-17 (MLLAALLAALVARTTLG), serve as a signal peptide directing secretion. 3 disulfide bridges follow: Cys-66–Cys-189, Cys-105–Cys-205, and Cys-117–Cys-126. The profusion stretch occupies residues 238–316 (YRKNGRTLPR…RPTPRPPRPE (79 aa)). The interval 252–350 (ATPYAIDPAR…PRTPAAPGVS (99 aa)) is disordered. Over residues 269 to 278 (PRPRPRPRPR) the composition is skewed to basic residues. The segment covering 282–292 (EPAPATPAPPD) has biased composition (pro residues). Basic and acidic residues predominate over residues 293-304 (RLPEPATRDHAA). Residues 356–376 (IVGTGTAMGALLVGVCVYIFF) traverse the membrane as a helical segment.

The protein belongs to the herpesviridae glycoprotein D family. Post-translationally, not N-glycosylated.

It localises to the virion membrane. Functionally, envelope glycoprotein that binds to the host cell entry receptor NECTIN1, promoting the virus entry into host cells. In contrast, does not use host TNFRSF14 as receptor. May trigger fusion with host membrane, by recruiting the fusion machinery composed of gB and gH/gL. This chain is Envelope glycoprotein D, found in Suid herpesvirus 1 (strain Rice) (SuHV-1).